Reading from the N-terminus, the 107-residue chain is IQ domain-containing protein F6 (107 aa).

One can recognise an IQ domain in the interval 42-71 (QEWAVVKVQAQVRMWQARRRFLQARQAACI).

This is IQ domain-containing protein F6 (IQCF6) from Homo sapiens (Human).